The following is a 145-amino-acid chain: Large ribosomal subunit protein uL13 (145 aa).

It belongs to the universal ribosomal protein uL13 family. As to quaternary structure, part of the 50S ribosomal subunit.

This protein is one of the early assembly proteins of the 50S ribosomal subunit, although it is not seen to bind rRNA by itself. It is important during the early stages of 50S assembly. The chain is Large ribosomal subunit protein uL13 from Staphylococcus saprophyticus subsp. saprophyticus (strain ATCC 15305 / DSM 20229 / NCIMB 8711 / NCTC 7292 / S-41).